We begin with the raw amino-acid sequence, 35 residues long: Probable endonuclease 4 (35 aa).

Glutamate 15 contacts Zn(2+).

Belongs to the AP endonuclease 2 family. Requires Zn(2+) as cofactor.

It catalyses the reaction Endonucleolytic cleavage to 5'-phosphooligonucleotide end-products.. In terms of biological role, endonuclease IV plays a role in DNA repair. It cleaves phosphodiester bonds at apurinic or apyrimidinic (AP) sites, generating a 3'-hydroxyl group and a 5'-terminal sugar phosphate. This is Probable endonuclease 4 (nfo) from Yersinia enterocolitica.